A 209-amino-acid chain; its full sequence is Non-structural protein 5 (209 aa).

Residue D86 coordinates Mg(2+).

It belongs to the rotavirus NSP5 family. As to quaternary structure, homodimer. Interacts with VP1. Interacts with VP2. Interacts with NSP2 and NSP6. Mg(2+) serves as cofactor. Post-translationally, O-glycosylated.

The protein resides in the host cytoplasm. Functionally, plays an essential role in the viral genome replication. Participates, together with NSP2, in the formation of viral factories (viroplasms) which are large inclusions in the host cytoplasm where replication intermediates are assembled and viral RNA replication takes place. Orchestrates the recruitment of viroplasmic proteins such as capsid proteins to these factories. The chain is Non-structural protein 5 from Bos taurus (Bovine).